The following is a 362-amino-acid chain: Probable secreted beta-glucosidase UTH1 (362 aa).

The N-terminal stretch at Met1–Ala17 is a signal peptide.

This sequence belongs to the SUN family.

Its subcellular location is the mitochondrion outer membrane. The protein resides in the secreted. It is found in the cell wall. Involved in aging, oxidative stress response, and in the regulation of mitochondrial biogenesis. Inactivation of UTH1 increases life span, leads to higher resistance to heat stress and to hydrogen peroxide, and increases sensitivity to the superoxide radical-generating drug paraquat and to copper. Also required for the selective autophagic degradation of mitochondria (mitophagy) in response to nitrogen starvation. Involved in the remodeling of the cell wall during the various phases of yeast culture development and under various environmental conditions and plays a role in septation. Involved in cell sensitivity to boric acid. This is Probable secreted beta-glucosidase UTH1 (UTH1) from Saccharomyces cerevisiae (strain RM11-1a) (Baker's yeast).